Reading from the N-terminus, the 1120-residue chain is Mechanosensitive channel MscK (1120 aa).

The N-terminal stretch at 1 to 33 is a signal peptide; that stretch reads MTMFQYYKRSRHFVFSAFIAFVFVLLCQNTAFA. The Periplasmic segment spans residues 34-499; that stretch reads RASSNGDLPT…MKITVNWQKA (466 aa). 3 coiled-coil regions span residues 43–98, 126–266, and 360–422; these read TKAD…VAEA, STLS…TLTE, and DELE…RREL. A helical membrane pass occupies residues 500-520; that stretch reads WPAVFIAFLAGLPLLLIAGLI. At 521 to 560 the chain is on the cytoplasmic side; the sequence is HWRLGWLKAYQQKLASAVGSLRNDSQLNTPKAILIDLIRA. Residues 561-581 form a helical membrane-spanning segment; the sequence is LPVCLIILAVGLILLTMQLNI. S582 is a topological domain (periplasmic). The chain crosses the membrane as a helical span at residues 583–603; that stretch reads ELLWSFSKKLAIFWLVFGLCW. Over 604–634 the chain is Cytoplasmic; the sequence is KVLEKNGVAVRHFGMPEQQTSHWRRQIVRIS. Residues 635–655 traverse the membrane as a helical segment; that stretch reads LALLPIHFWSVVAELSPLHLM. The Periplasmic segment spans residues 656-657; that stretch reads DD. Residues 658–678 form a helical membrane-spanning segment; it reads VLGQAMIFFNLLLIAFLVWPM. The Cytoplasmic portion of the chain corresponds to 679–692; it reads CRESWRDKESHTMR. The chain crosses the membrane as a helical span at residues 693-713; that stretch reads LVTITVLSIIPIALMVLTATG. Topologically, residues 714 to 728 are periplasmic; the sequence is YFYTTLRLAGRWIET. The helical transmembrane segment at 729–749 threads the bilayer; the sequence is VYLVIIWNLLYQTVLRGLSVA. Over 750 to 796 the chain is Cytoplasmic; the sequence is ARRIAWRRALARRQNLVKEGAEGAEPPEEPTIALEQVNQQTLRITML. A helical membrane pass occupies residues 797-817; the sequence is LMFALFGVMFWAIWSDLITVF. Over 818–839 the chain is Periplasmic; it reads SYLDSITLWHYNGTEAGAAVVK. A helical transmembrane segment spans residues 840–860; sequence NVTMGSLLFAIIASMVAWALI. The Cytoplasmic segment spans residues 861–886; that stretch reads RNLPGLLEVLVLSRLNMRQGASYAIT. Residues 887-907 form a helical membrane-spanning segment; sequence TILNYIIIAVGAMTVFGSLGV. The Periplasmic segment spans residues 908-921; that stretch reads SWDKLQWLAAALSV. The chain crosses the membrane as a helical span at residues 922–942; sequence GLGFGLQEIFGNFVSGLIILF. Residues 943-1120 are Cytoplasmic-facing; it reads ERPVRIGDTV…KGDDPTPAVG (178 aa). Residues 1057 to 1081 are a coiled coil; that stretch reads YVRELRDRSRTVDELNRTIDQLCRE.

It belongs to the MscS (TC 1.A.23) family.

Its subcellular location is the cell inner membrane. Functionally, mechanosensitive channel that opens in response to membrane tension and specific ionic conditions. Requires high concentrations of external K(+), NH(4)(+), Rb(+) or Cs(+) to gate. May participate in the regulation of osmotic pressure changes within the cell, although it does not appear to have a major role in osmolarity regulation. Forms an ion channel of 1.0 nanosiemens conductance. The channel can remain active for between 30 seconds and over 3 minutes; it does not desensitize upon extended pressure. Its activity is masked in wild-type cells by the MscS channel. This Escherichia coli (strain K12) protein is Mechanosensitive channel MscK (mscK).